We begin with the raw amino-acid sequence, 399 residues long: Glutathione S-transferase LANCL1 (399 aa).

Ala2 bears the N-acetylalanine mark. Lys142 carries the post-translational modification N6-acetyllysine. Zn(2+) is bound at residue Cys276. Lys317 is a glutathione binding site. Zn(2+) is bound by residues Cys322 and His323. 364–367 (RTAD) is a glutathione binding site.

It belongs to the LanC-like protein family. Interacts with the C-terminal of STOM. Interacts with the EPS8 SH3 domain. Interaction with EPS8 is inhibited by glutathione binding. In terms of tissue distribution, detected in spinal cord (at protein level). Ubiquitous. Strongly expressed in brain, testis, alveolar macrophages and epithelial cells of the lung, kidney and intestine. Expression in brain increases during the first postnatal month and remaining high in adult.

It localises to the cytoplasm. Its subcellular location is the cell membrane. It carries out the reaction RX + glutathione = an S-substituted glutathione + a halide anion + H(+). It catalyses the reaction 1-chloro-2,4-dinitrobenzene + glutathione = 2,4-dinitrophenyl-S-glutathione + chloride + H(+). In terms of biological role, functions as a glutathione transferase. Catalyzes conjugation of the glutathione (GSH) to artificial substrates 1-chloro-2,4-dinitrobenzene (CDNB) and p-nitrophenyl acetate. Mitigates neuronal oxidative stress during normal postnatal development and in response to oxidative stresses probably through GSH antioxidant defense mechanism. May play a role in EPS8 signaling. Binds glutathione. The polypeptide is Glutathione S-transferase LANCL1 (Mus musculus (Mouse)).